The primary structure comprises 1006 residues: Zinc finger protein ZFPM1 (1006 aa).

Basic residues predominate over residues 1–13 (MSRRKQSNPRQIK). 2 disordered regions span residues 1 to 93 (MSRR…DELE) and 114 to 133 (SWGP…RQAE). The segment covering 15 to 25 (SLGDMEAREEV) has biased composition (basic and acidic residues). Positions 42-62 (APSPPSADVNSPPPLPPPTSP) are enriched in pro residues. Positions 66–79 (KELEGQEPEPRPTE) are enriched in basic and acidic residues. Phosphoserine occurs at positions 84 and 128. Over residues 121-130 (SVQTRASSPR) the composition is skewed to polar residues. The CCHC FOG-type 1 zinc-finger motif lies at 235-268 (VINKDVFPCKDCGIWYRSERNLQAHLLYYCASRQ). Residues Cys-243, Cys-246, His-259, and Cys-264 each contribute to the Zn(2+) site. Ser-272 bears the Phosphoserine mark. 3 consecutive C2H2-type zinc fingers follow at residues 290 to 314 (RVCP…MRSH), 320 to 342 (FVCL…LKVH), and 348 to 371 (GVCH…VTNH). Residues 330 to 341 (TTKANCERHLKV) form an interaction with TACC3 region. The residue at position 384 (Ser-384) is a Phosphoserine. Disordered regions lie at residues 384-409 (SPGA…HTAL), 438-460 (NGEA…AAPR), and 473-515 (APIL…SPVP). Over residues 485 to 515 (APSRTPSPRSPAPARVKAELSSPTPGSSPVP) the composition is skewed to low complexity. Phosphoserine occurs at positions 491 and 494. Residues 571 to 604 (PGAPKGATCFECEITFSNVNNYYVHKRLYCSGRR) form a CCHC FOG-type 2 zinc finger. Zn(2+)-binding residues include Cys-579, Cys-582, His-595, and Cys-600. Positions 605 to 681 (APEDAPAARR…SVDDAEDDPS (77 aa)) are disordered. A compositionally biased stretch (pro residues) spans 617–629 (APPGPARAPPGQP). Ser-638 and Ser-671 each carry phosphoserine. A CCHC FOG-type 3 zinc finger spans residues 677-710 (EDDPSRTLCEACNIRFSRHETYTVHKRYYCASRH). Residues Cys-685, Cys-688, His-701, and Cys-706 each contribute to the Zn(2+) site. A disordered region spans residues 708–810 (SRHDPPPRRP…PRRPLPGAPA (103 aa)). Composition is skewed to pro residues over residues 715–735 (RRPA…PSPA) and 754–769 (APPP…PESP). The span at 780–791 (GLAPARSPGPAA) shows a compositional bias: low complexity. Phosphoserine is present on Ser-786. The tract at residues 794–800 (PIDLSKK) is interaction with CTBP2. Residues 811 to 844 (PALADYHECTACRVSFHSLEAYLAHKKYSCPAAP) form a CCHC FOG-type 4 zinc finger. Zn(2+) contacts are provided by Cys-819, Cys-822, His-835, and Cys-840. A C2H2-type 4 zinc finger spans residues 854-877 (AACPYCPPNGPVRGDLLEHFRLAH). A disordered region spans residues 889 to 971 (GVEARTPADR…KGTPAPLPNG (83 aa)). 4 positions are modified to phosphoserine: Ser-901, Ser-909, Ser-914, and Ser-935. Over residues 925-950 (PQEPPPGPPPSPAAAPEAVPPPPAPP) the composition is skewed to pro residues. A CCHC FOG-type 5 zinc finger spans residues 968–1001 (LPNGNHRYCRLCNIKFSSLSTFIAHKKYYCSSHA). Residues Cys-976, Cys-979, His-992, and Cys-997 each coordinate Zn(2+).

It belongs to the FOG (Friend of GATA) family. As to quaternary structure, interacts with corepressor CTBP2; this interaction is however not essential for corepressor activity. Interacts with the N-terminal zinc-finger of GATA1, GATA2 and probably GATA3. In terms of tissue distribution, mainly expressed in hematopoietic tissues. Also expressed in adult cerebellum, stomach, lymph node, liver and pancreas. Expressed in fetal heart, liver and spleen.

It localises to the nucleus. Transcription regulator that plays an essential role in erythroid and megakaryocytic cell differentiation. Essential cofactor that acts via the formation of a heterodimer with transcription factors of the GATA family GATA1, GATA2 and GATA3. Such heterodimer can both activate or repress transcriptional activity, depending on the cell and promoter context. The heterodimer formed with GATA proteins is essential to activate expression of genes such as NFE2, ITGA2B, alpha- and beta-globin, while it represses expression of KLF1. May be involved in regulation of some genes in gonads. May also be involved in cardiac development, in a non-redundant way with ZFPM2/FOG2. In Homo sapiens (Human), this protein is Zinc finger protein ZFPM1 (ZFPM1).